Reading from the N-terminus, the 139-residue chain is Probable transcription termination protein NusA (139 aa).

The KH domain maps to 31-97; that stretch reads DDRVVYVVTA…YNVTVSENDT (67 aa).

Belongs to the NusA family.

Its subcellular location is the cytoplasm. Its function is as follows. Participates in transcription termination. The chain is Probable transcription termination protein NusA from Halobacterium salinarum (strain ATCC 29341 / DSM 671 / R1).